Consider the following 422-residue polypeptide: Validoxylamine A glucosyltransferase (422 aa).

It belongs to the glycosyltransferase 2 family. Mn(2+) is required as a cofactor.

The catalysed reaction is validoxylamine A + UDP-alpha-D-glucose = validamycin A + UDP + H(+). Involved in the biosynthesis of the antifungal agent validamycin A. Catalyzes the final attachment of glucose from UDP-alpha-D-glucose to validoxylamine A to yield validamycin A. UDP-glucose is the most efficient glycosyl donor, whereas GDP-glucose and ADP-glucose are much less efficient. ValG also utilizes UDP-galactose as substrate to produce the new validamycin analog, 4''-epi-validamycin A. In Streptomyces hygroscopicus subsp. jinggangensis (strain 5008), this protein is Validoxylamine A glucosyltransferase.